The sequence spans 478 residues: ATP synthase subunit beta (478 aa).

An ATP-binding site is contributed by glycine 152–threonine 159.

Belongs to the ATPase alpha/beta chains family. F-type ATPases have 2 components, CF(1) - the catalytic core - and CF(0) - the membrane proton channel. CF(1) has five subunits: alpha(3), beta(3), gamma(1), delta(1), epsilon(1). CF(0) has three main subunits: a(1), b(2) and c(9-12). The alpha and beta chains form an alternating ring which encloses part of the gamma chain. CF(1) is attached to CF(0) by a central stalk formed by the gamma and epsilon chains, while a peripheral stalk is formed by the delta and b chains.

The protein localises to the cell membrane. The catalysed reaction is ATP + H2O + 4 H(+)(in) = ADP + phosphate + 5 H(+)(out). Functionally, produces ATP from ADP in the presence of a proton gradient across the membrane. The catalytic sites are hosted primarily by the beta subunits. The polypeptide is ATP synthase subunit beta (Wolbachia pipientis subsp. Culex pipiens (strain wPip)).